We begin with the raw amino-acid sequence, 331 residues long: NADH-quinone oxidoreductase subunit H 2 (331 aa).

Transmembrane regions (helical) follow at residues 6 to 26, 79 to 99, 120 to 140, 155 to 175, 193 to 213, 242 to 262, 271 to 291, and 310 to 330; these read AGFL…LLVA, IFML…AVIP, VGLL…ALGG, GAAQ…PVVM, PFIL…MAEI, LFFL…AVLF, LPPV…MIWV, and VLIP…LWMG.

The protein belongs to the complex I subunit 1 family. In terms of assembly, NDH-1 is composed of 14 different subunits. Subunits NuoA, H, J, K, L, M, N constitute the membrane sector of the complex.

The protein localises to the cell inner membrane. It carries out the reaction a quinone + NADH + 5 H(+)(in) = a quinol + NAD(+) + 4 H(+)(out). Functionally, NDH-1 shuttles electrons from NADH, via FMN and iron-sulfur (Fe-S) centers, to quinones in the respiratory chain. The immediate electron acceptor for the enzyme in this species is believed to be ubiquinone. Couples the redox reaction to proton translocation (for every two electrons transferred, four hydrogen ions are translocated across the cytoplasmic membrane), and thus conserves the redox energy in a proton gradient. This subunit may bind ubiquinone. The sequence is that of NADH-quinone oxidoreductase subunit H 2 from Syntrophobacter fumaroxidans (strain DSM 10017 / MPOB).